An 88-amino-acid polypeptide reads, in one-letter code: Small ribosomal subunit protein bS20 (88 aa).

Positions 1-21 are enriched in basic residues; sequence MANSKSAKKRALQSEKRRQHN. Residues 1–26 form a disordered region; it reads MANSKSAKKRALQSEKRRQHNASRSS.

This sequence belongs to the bacterial ribosomal protein bS20 family.

Binds directly to 16S ribosomal RNA. The protein is Small ribosomal subunit protein bS20 of Shewanella halifaxensis (strain HAW-EB4).